The following is a 363-amino-acid chain: Lactose transport ATP-binding protein LacK (363 aa).

The region spanning 4–234 is the ABC transporter domain; sequence VRLTDIRKSY…PDNMFVAGFI (231 aa). 36–43 is an ATP binding site; that stretch reads GPSGCGKS.

Belongs to the ABC transporter superfamily.

It localises to the cell inner membrane. Its function is as follows. Part of the binding-protein-dependent transport system for lactose. Probably responsible for energy coupling to the transport system. This chain is Lactose transport ATP-binding protein LacK (lacK), found in Rhizobium radiobacter (Agrobacterium tumefaciens).